A 234-amino-acid polypeptide reads, in one-letter code: Purine nucleoside phosphorylase DeoD-type (234 aa).

Histidine 4 is an a purine D-ribonucleoside binding site. Residues glycine 20, arginine 24, arginine 43, and 87 to 90 (RIGS) each bind phosphate. A purine D-ribonucleoside is bound by residues 179–181 (DME) and 203–204 (SD). The active-site Proton donor is the aspartate 204.

The protein belongs to the PNP/UDP phosphorylase family. As to quaternary structure, homohexamer; trimer of homodimers.

It catalyses the reaction a purine D-ribonucleoside + phosphate = a purine nucleobase + alpha-D-ribose 1-phosphate. It carries out the reaction a purine 2'-deoxy-D-ribonucleoside + phosphate = a purine nucleobase + 2-deoxy-alpha-D-ribose 1-phosphate. Functionally, catalyzes the reversible phosphorolytic breakdown of the N-glycosidic bond in the beta-(deoxy)ribonucleoside molecules, with the formation of the corresponding free purine bases and pentose-1-phosphate. This chain is Purine nucleoside phosphorylase DeoD-type, found in Shewanella oneidensis (strain ATCC 700550 / JCM 31522 / CIP 106686 / LMG 19005 / NCIMB 14063 / MR-1).